A 396-amino-acid chain; its full sequence is Protein btn1 (396 aa).

The next 8 helical transmembrane spans lie at 15 to 35 (CFLI…SAAL), 45 to 65 (GVVL…ASIL), 76 to 96 (IGFC…SSSV), 138 to 158 (LAGL…NFSV), 161 to 181 (TLII…FVLP), 234 to 254 (FLVY…LLFP), 296 to 316 (LAIT…LYLT), and 321 to 341 (FVLF…VNVY).

The protein belongs to the battenin family.

It localises to the endoplasmic reticulum membrane. Its subcellular location is the vacuole membrane. Its function is as follows. Involved in vacuolar transport and vacuole pH homeostasis. Also required for cytokinesis. The protein is Protein btn1 of Schizosaccharomyces pombe (strain 972 / ATCC 24843) (Fission yeast).